A 338-amino-acid polypeptide reads, in one-letter code: tRNA N6-adenosine threonylcarbamoyltransferase (338 aa).

Fe cation-binding residues include histidine 111 and histidine 115. Residues 134 to 138 (LVSGG), aspartate 167, glycine 180, and asparagine 272 contribute to the substrate site. Position 300 (aspartate 300) interacts with Fe cation.

This sequence belongs to the KAE1 / TsaD family. Fe(2+) is required as a cofactor.

Its subcellular location is the cytoplasm. It catalyses the reaction L-threonylcarbamoyladenylate + adenosine(37) in tRNA = N(6)-L-threonylcarbamoyladenosine(37) in tRNA + AMP + H(+). Functionally, required for the formation of a threonylcarbamoyl group on adenosine at position 37 (t(6)A37) in tRNAs that read codons beginning with adenine. Is involved in the transfer of the threonylcarbamoyl moiety of threonylcarbamoyl-AMP (TC-AMP) to the N6 group of A37, together with TsaE and TsaB. TsaD likely plays a direct catalytic role in this reaction. In Shewanella putrefaciens (strain CN-32 / ATCC BAA-453), this protein is tRNA N6-adenosine threonylcarbamoyltransferase.